The sequence spans 283 residues: Probable protein phosphatase 2C 58 (283 aa).

In terms of domain architecture, PPM-type phosphatase spans 35–282; it reads THGFHCVKGK…DDISCIVVKF (248 aa). Mn(2+)-binding residues include Asp-72, Gly-73, Asp-234, and Asp-273.

Belongs to the PP2C family. Mg(2+) is required as a cofactor. Mn(2+) serves as cofactor.

It carries out the reaction O-phospho-L-seryl-[protein] + H2O = L-seryl-[protein] + phosphate. It catalyses the reaction O-phospho-L-threonyl-[protein] + H2O = L-threonyl-[protein] + phosphate. This Arabidopsis thaliana (Mouse-ear cress) protein is Probable protein phosphatase 2C 58.